The sequence spans 104 residues: Large ribosomal subunit protein uL24 (104 aa).

Belongs to the universal ribosomal protein uL24 family. Part of the 50S ribosomal subunit.

In terms of biological role, one of two assembly initiator proteins, it binds directly to the 5'-end of the 23S rRNA, where it nucleates assembly of the 50S subunit. Functionally, one of the proteins that surrounds the polypeptide exit tunnel on the outside of the subunit. The protein is Large ribosomal subunit protein uL24 of Neorickettsia sennetsu (strain ATCC VR-367 / Miyayama) (Ehrlichia sennetsu).